Reading from the N-terminus, the 492-residue chain is Fascin-2 (492 aa).

Belongs to the fascin family. In terms of tissue distribution, expressed in the inner ear. Abundant in the utricle.

It localises to the cytoplasm. The protein localises to the cytoskeleton. The protein resides in the cell projection. It is found in the stereocilium. Functionally, acts as an actin bundling protein. May play a pivotal role in photoreceptor cell-specific events, such as disk morphogenesis. Important for maintaining functional hair-cell bundles in the inner ear. May stiffen the longer stereocilia of hair-cell bundles in the inner ear enabling better force transmission to tip links. This is Fascin-2 (Fscn2) from Mus musculus (Mouse).